We begin with the raw amino-acid sequence, 341 residues long: MPGLLLDTLNRTRSDRVPLWLMRQAGRYLPEYRELRARKGGFLELVYDSEAAREVTLQPIRRFGFDGAILFSDILIVPHALGQKLEFLAGEGPHLSPRLADAELEALSTVPERLDAIYETVRQVRAALDPETTLLGFAGSPWTVATYMVAGEGSRDQQAARSMAYTDPGKLQAIVDAIIDLTVEYLVGQIDAGAEAVQLFDSWAGSLAPDQFERWVIAPNAAIVRRLKEARPDALVIGFPKGAGAKLSAYAAGTGVDAIALDETIDPAWAHTVLPDGMPVQGNLDPLQILAGGDAMVERTKAILGALADRPHVFNLGHGIDKHTPIGHVERLVDTVRNWQR.

Substrate-binding positions include 23–27 (RQAGR), D73, Y147, S202, and H318.

Belongs to the uroporphyrinogen decarboxylase family. In terms of assembly, homodimer.

The protein localises to the cytoplasm. It carries out the reaction uroporphyrinogen III + 4 H(+) = coproporphyrinogen III + 4 CO2. The protein operates within porphyrin-containing compound metabolism; protoporphyrin-IX biosynthesis; coproporphyrinogen-III from 5-aminolevulinate: step 4/4. Its function is as follows. Catalyzes the decarboxylation of four acetate groups of uroporphyrinogen-III to yield coproporphyrinogen-III. This chain is Uroporphyrinogen decarboxylase, found in Erythrobacter litoralis (strain HTCC2594).